Here is a 345-residue protein sequence, read N- to C-terminus: uncharacterized protein (345 aa).

Its subcellular location is the cell membrane. In terms of biological role, involved in potassium and divalent cation transport. Enhances the transport activity of the cation/potassium transporter CzcD. This is an uncharacterized protein from Bacillus velezensis (strain DSM 23117 / BGSC 10A6 / LMG 26770 / FZB42) (Bacillus amyloliquefaciens subsp. plantarum).